A 441-amino-acid chain; its full sequence is Probable magnesium transporter NIPA8 (441 aa).

Residues 1–4 lie on the Extracellular side of the membrane; sequence MGEW. The chain crosses the membrane as a helical span at residues 5–25; sequence VIGAFINIFGSVAINFGTNLL. Residues 26–56 lie on the Cytoplasmic side of the membrane; that stretch reads KLGHNERERLALQDGGGKMPLKPIIHNQTWR. Residues 57–77 form a helical membrane-spanning segment; sequence VGILVFLLGNCLNFISFGYAA. Residues 78–79 lie on the Extracellular side of the membrane; that stretch reads QS. Residues 80 to 100 traverse the membrane as a helical segment; sequence LLAALGSIQFVSNIAFAYVVL. Residues 101–105 lie on the Cytoplasmic side of the membrane; it reads NKMVT. A helical transmembrane segment spans residues 106 to 126; the sequence is VKVLVATAFIVLGNVFLVAFG. Over 127 to 144 the chain is Extracellular; the sequence is NHQSPVFTPEQLAEKYSN. The chain crosses the membrane as a helical span at residues 145-165; it reads VTFLVYCGILILIVAVHHFLY. At 166–184 the chain is on the cytoplasmic side; that stretch reads RKGEVLISTPGQEISSYWK. Residues 185 to 205 form a helical membrane-spanning segment; sequence MLLPFSYAVVSGAIGSCSVLF. Residues 206–222 are Extracellular-facing; it reads AKSLSNLLRLAMSSSYQ. The chain crosses the membrane as a helical span at residues 223–243; the sequence is LHSWFTYSMLLLFLSTAGFWM. The Cytoplasmic portion of the chain corresponds to 244–255; it reads TRLNEGLSLYDA. The chain crosses the membrane as a helical span at residues 256-276; that stretch reads ILIVPMFQIAWTFFSICTGCI. The Extracellular segment spans residues 277-288; that stretch reads YFQEFQVFDALR. The helical transmembrane segment at 289–309 threads the bilayer; the sequence is TTMFILGMMCVFIGISLLAPD. Topologically, residues 310 to 441 are cytoplasmic; that stretch reads DTRGNETKDN…MLEKTISSKA (132 aa). A disordered region spans residues 313–347; the sequence is GNETKDNSSSLDSIVSSSVPTEEDRLIPQSSEDGH. Residues 320-330 show a composition bias toward low complexity; that stretch reads SSSLDSIVSSS. Basic and acidic residues predominate over residues 334–347; the sequence is EEDRLIPQSSEDGH.

Belongs to the NIPA (TC 2.A.7) family. As to quaternary structure, homodimer.

The protein localises to the cell membrane. The protein resides in the early endosome. Acts as a Mg(2+) transporter. Can also transport other divalent cations such as Fe(2+), Sr(2+), Ba(2+), Mn(2+) and Co(2+) but to a much less extent than Mg(2+). This Arabidopsis thaliana (Mouse-ear cress) protein is Probable magnesium transporter NIPA8.